The following is a 513-amino-acid chain: Probable DNA ligase (513 aa).

Position 213 (E213) interacts with ATP. K215 (N6-AMP-lysine intermediate) is an active-site residue. ATP-binding residues include R220, R235, E264, F304, R376, and K382.

Belongs to the ATP-dependent DNA ligase family. The cofactor is Mg(2+).

It catalyses the reaction ATP + (deoxyribonucleotide)n-3'-hydroxyl + 5'-phospho-(deoxyribonucleotide)m = (deoxyribonucleotide)n+m + AMP + diphosphate.. Functionally, DNA ligase that seals nicks in double-stranded DNA during DNA replication, DNA recombination and DNA repair. This chain is Probable DNA ligase, found in Anaeromyxobacter sp. (strain K).